Reading from the N-terminus, the 353-residue chain is Photosystem II D2 protein (353 aa).

Threonine 2 is modified (N-acetylthreonine). Residue threonine 2 is modified to Phosphothreonine. The helical transmembrane segment at cysteine 41–threonine 61 threads the bilayer. Histidine 118 is a binding site for chlorophyll a. A helical membrane pass occupies residues glycine 125 to proline 141. Glutamine 130 and asparagine 143 together coordinate pheophytin a. Residues valine 153 to serine 166 traverse the membrane as a helical segment. Histidine 198 contributes to the chlorophyll a binding site. A helical transmembrane segment spans residues alanine 208–aspartate 228. Histidine 215 and phenylalanine 262 together coordinate a plastoquinone. Histidine 215 serves as a coordination point for Fe cation. A Fe cation-binding site is contributed by histidine 269. Residues glycine 279–arginine 295 traverse the membrane as a helical segment.

It belongs to the reaction center PufL/M/PsbA/D family. As to quaternary structure, PSII is composed of 1 copy each of membrane proteins PsbA, PsbB, PsbC, PsbD, PsbE, PsbF, PsbH, PsbI, PsbJ, PsbK, PsbL, PsbM, PsbT, PsbX, PsbY, PsbZ, Psb30/Ycf12, at least 3 peripheral proteins of the oxygen-evolving complex and a large number of cofactors. It forms dimeric complexes. The D1/D2 heterodimer binds P680, chlorophylls that are the primary electron donor of PSII, and subsequent electron acceptors. It shares a non-heme iron and each subunit binds pheophytin, quinone, additional chlorophylls, carotenoids and lipids. There is also a Cl(-1) ion associated with D1 and D2, which is required for oxygen evolution. The PSII complex binds additional chlorophylls, carotenoids and specific lipids. is required as a cofactor. Only phosphorylated in mesophyll cells, phosphorylation increases when cells are grown under high rather than low light regimes (70 vs 900 umol photons/m-2/s).

The protein localises to the plastid. It localises to the chloroplast thylakoid membrane. It carries out the reaction 2 a plastoquinone + 4 hnu + 2 H2O = 2 a plastoquinol + O2. In terms of biological role, photosystem II (PSII) is a light-driven water:plastoquinone oxidoreductase that uses light energy to abstract electrons from H(2)O, generating O(2) and a proton gradient subsequently used for ATP formation. It consists of a core antenna complex that captures photons, and an electron transfer chain that converts photonic excitation into a charge separation. The D1/D2 (PsbA/PsbD) reaction center heterodimer binds P680, the primary electron donor of PSII as well as several subsequent electron acceptors. D2 is needed for assembly of a stable PSII complex. The sequence is that of Photosystem II D2 protein from Zea mays (Maize).